The primary structure comprises 712 residues: Polyribonucleotide nucleotidyltransferase (712 aa).

2 residues coordinate Mg(2+): Asp-487 and Asp-493. The 60-residue stretch at Pro-554–Ile-613 folds into the KH domain. Residues Gly-623 to Lys-691 enclose the S1 motif domain.

Belongs to the polyribonucleotide nucleotidyltransferase family. Component of the RNA degradosome, which is a multiprotein complex involved in RNA processing and mRNA degradation. Requires Mg(2+) as cofactor.

It localises to the cytoplasm. It catalyses the reaction RNA(n+1) + phosphate = RNA(n) + a ribonucleoside 5'-diphosphate. In terms of biological role, involved in mRNA degradation. Catalyzes the phosphorolysis of single-stranded polyribonucleotides processively in the 3'- to 5'-direction. In Vibrio cholerae serotype O1 (strain ATCC 39541 / Classical Ogawa 395 / O395), this protein is Polyribonucleotide nucleotidyltransferase.